A 230-amino-acid chain; its full sequence is Protein-L-isoaspartate O-methyltransferase (230 aa).

The active site involves S65.

Belongs to the methyltransferase superfamily. L-isoaspartyl/D-aspartyl protein methyltransferase family. In terms of assembly, monomer. Highest contents in seeds.

It is found in the cytoplasm. It carries out the reaction [protein]-L-isoaspartate + S-adenosyl-L-methionine = [protein]-L-isoaspartate alpha-methyl ester + S-adenosyl-L-homocysteine. In terms of biological role, catalyzes the methyl esterification of L-isoaspartyl residues in peptides and proteins that result from spontaneous decomposition of normal L-aspartyl and L-asparaginyl residues. It plays a role in the repair and/or degradation of damaged proteins. This enzyme does not act on D-aspartyl residues. In Triticum aestivum (Wheat), this protein is Protein-L-isoaspartate O-methyltransferase (PCM).